The following is a 574-amino-acid chain: MRWSRCYIPTLKEAPSDAEVVSHKLLVRAGMIRKLTSGIYTFMPMGLRALNKVAAIVREEMNRAGAQEVLMPMVQPADLWQETGRWEFYGKELLRFRDRNDRDYCLGPTHEEVITDLVRGEVRSYRQLPINLYQIQTKFRDEIRPRFGLMRGREFVMKDAYSFDRDQSGCDESYKAMYAAYQRIFSRLGLRFRAVEADSGSIGGSFSHEFMVLADTGEDTLAVCTACEYAANVERAEVTGTPCTRPAAAALAEVPTPGAHTIEEVSAFLGVPADMLVKTLLFVADGEPVAALVRGDRELNEVKLKNLLGADSLELATPEQVEAWTGAPVGFAGPVGLHGVKRVFADTELKGDAGWIVGANKADTHLREVSLTRDAAIEAYADLRMITASDPCPRCGGAVELPKGIEVGHVFKLGLKYSKSMNATFLDENGKEQVMVMGCYGIGVSRVVASCIEQNNDGDGIVFPPPIAPYEVALLLLDPKNEEAAAKAAEIESFLEAEGHDVLLDDRDERPGVKFKDADLIGSPYQLVLGGKGLARGVVEAKNRRSGEKTELPVEGFAEAFRDWRAGVLKGWGL.

This sequence belongs to the class-II aminoacyl-tRNA synthetase family. ProS type 1 subfamily. Homodimer.

The protein localises to the cytoplasm. The enzyme catalyses tRNA(Pro) + L-proline + ATP = L-prolyl-tRNA(Pro) + AMP + diphosphate. Catalyzes the attachment of proline to tRNA(Pro) in a two-step reaction: proline is first activated by ATP to form Pro-AMP and then transferred to the acceptor end of tRNA(Pro). As ProRS can inadvertently accommodate and process non-cognate amino acids such as alanine and cysteine, to avoid such errors it has two additional distinct editing activities against alanine. One activity is designated as 'pretransfer' editing and involves the tRNA(Pro)-independent hydrolysis of activated Ala-AMP. The other activity is designated 'posttransfer' editing and involves deacylation of mischarged Ala-tRNA(Pro). The misacylated Cys-tRNA(Pro) is not edited by ProRS. This Nitratidesulfovibrio vulgaris (strain ATCC 29579 / DSM 644 / CCUG 34227 / NCIMB 8303 / VKM B-1760 / Hildenborough) (Desulfovibrio vulgaris) protein is Proline--tRNA ligase.